The following is a 73-amino-acid chain: uncharacterized protein (73 aa).

This is an uncharacterized protein from Haemophilus influenzae (strain ATCC 51907 / DSM 11121 / KW20 / Rd).